The primary structure comprises 117 residues: Anti-sigma F factor antagonist (117 aa).

The STAS domain occupies 3–113 (LGIDMNVKES…QSEQQALLTL (111 aa)). Ser58 is subject to Phosphoserine.

This sequence belongs to the anti-sigma-factor antagonist family. In terms of processing, phosphorylated by SpoIIAB on a serine residue.

In the phosphorylated form it could act as an anti-anti-sigma factor that counteracts SpoIIAB and thus releases sigma f from inhibition. This Bacillus subtilis (strain 168) protein is Anti-sigma F factor antagonist (spoIIAA).